The following is a 177-amino-acid chain: Large ribosomal subunit protein uL6 (177 aa).

The protein belongs to the universal ribosomal protein uL6 family. In terms of assembly, part of the 50S ribosomal subunit.

In terms of biological role, this protein binds to the 23S rRNA, and is important in its secondary structure. It is located near the subunit interface in the base of the L7/L12 stalk, and near the tRNA binding site of the peptidyltransferase center. In Delftia acidovorans (strain DSM 14801 / SPH-1), this protein is Large ribosomal subunit protein uL6.